Consider the following 481-residue polypeptide: UDP-glycosyltransferase 88F3 (481 aa).

UDP-alpha-D-glucose contacts are provided by residues S288, 357–358, 375–383, and 397–400; these read WA, HCGWNSVLE, and YAEQ.

This sequence belongs to the UDP-glycosyltransferase family.

Functionally, glycosyltransferase that may possess chalcone and dihydrochalcone 2'-O-glucosyltransferase activity. The protein is UDP-glycosyltransferase 88F3 of Pyrus communis (Pear).